A 196-amino-acid polypeptide reads, in one-letter code: MPLKSPFYDSSDNLIHDGWLLLRASNTPCTVLRPEIRSRFLLLSLQKPSADESPDNDKELSSNPDSGKKRKRRVLFSKAQTYELERRFRQQRYLSAPEREHLASLIRLTPTQVKIWFQNHRYKMKRARSEKGMEVTPLPSPRRVAVPVLVRDGKPCHTLKAQDFNPATFPTGIPFSAYSAQSLHHMQYNAQFLFYH.

A disordered region spans residues proline 48 to arginine 72. Positions lysine 69 to arginine 128 form a DNA-binding region, homeobox.

The protein belongs to the NK-2 homeobox family. Forebrain and midbrain.

Its subcellular location is the nucleus. Defines dorsal-ventral domains in developing brain. May play a role in defining positional information along the anterior-posterior (a/p) axis and the dorsal-ventral (d/v) axis of the developing nervous system. May be involved in determining positional or boundary information rather than determining a given cell type. The chain is Homeobox protein XENK-2 from Xenopus laevis (African clawed frog).